The primary structure comprises 174 residues: Urease accessory protein UreE (174 aa).

The tract at residues 146 to 174 (NGAYATGGHAHDHDGEPEHVHGPGCQHAH) is disordered. A compositionally biased stretch (basic and acidic residues) spans 154 to 166 (HAHDHDGEPEHVH).

Belongs to the UreE family.

It is found in the cytoplasm. In terms of biological role, involved in urease metallocenter assembly. Binds nickel. Probably functions as a nickel donor during metallocenter assembly. The protein is Urease accessory protein UreE of Albidiferax ferrireducens (strain ATCC BAA-621 / DSM 15236 / T118) (Rhodoferax ferrireducens).